Here is a 368-residue protein sequence, read N- to C-terminus: NAD(P)H-quinone oxidoreductase subunit 1, chloroplastic (368 aa).

The next 6 membrane-spanning stretches (helical) occupy residues 27–47 (FIWI…GVLV), 97–117 (WLFN…YLVI), 130–150 (IGVF…LMAG), 269–289 (SSLF…PFLL), 308–328 (IIIG…IAIM), and 348–368 (FLLP…AFLL).

This sequence belongs to the complex I subunit 1 family. As to quaternary structure, NDH is composed of at least 16 different subunits, 5 of which are encoded in the nucleus.

Its subcellular location is the plastid. It localises to the chloroplast thylakoid membrane. It carries out the reaction a plastoquinone + NADH + (n+1) H(+)(in) = a plastoquinol + NAD(+) + n H(+)(out). The catalysed reaction is a plastoquinone + NADPH + (n+1) H(+)(in) = a plastoquinol + NADP(+) + n H(+)(out). Functionally, NDH shuttles electrons from NAD(P)H:plastoquinone, via FMN and iron-sulfur (Fe-S) centers, to quinones in the photosynthetic chain and possibly in a chloroplast respiratory chain. The immediate electron acceptor for the enzyme in this species is believed to be plastoquinone. Couples the redox reaction to proton translocation, and thus conserves the redox energy in a proton gradient. The chain is NAD(P)H-quinone oxidoreductase subunit 1, chloroplastic from Physcomitrium patens (Spreading-leaved earth moss).